Reading from the N-terminus, the 342-residue chain is Immune-associated nucleotide-binding protein 9 (342 aa).

Positions 22–229 (NPKRTLVLVG…YSDELFHELQ (208 aa)) constitute an AIG1-type G domain. The interval 31 to 38 (GRTGNGKS) is G1. GTP-binding positions include 31–39 (GRTGNGKSA) and serine 52. The G2 stretch occupies residues 58 to 62 (GVTST). Residues 80-83 (DTPG) are G3. The G4 stretch occupies residues 149–152 (TGGD). The segment at 188–190 (NNK) is G5. Asparagine 189 is a GTP binding site. Positions 276 to 342 (ETKLRDTAKR…QKKLGKCINL (67 aa)) form a coiled coil.

Belongs to the TRAFAC class TrmE-Era-EngA-EngB-Septin-like GTPase superfamily. AIG1/Toc34/Toc159-like paraseptin GTPase family. IAN subfamily. As to expression, mainly expressed in leaves.

The protein is Immune-associated nucleotide-binding protein 9 of Arabidopsis thaliana (Mouse-ear cress).